Here is a 132-residue protein sequence, read N- to C-terminus: Large ribosomal subunit protein bL19 (132 aa).

The protein belongs to the bacterial ribosomal protein bL19 family.

In terms of biological role, this protein is located at the 30S-50S ribosomal subunit interface and may play a role in the structure and function of the aminoacyl-tRNA binding site. This Persephonella marina (strain DSM 14350 / EX-H1) protein is Large ribosomal subunit protein bL19.